A 137-amino-acid chain; its full sequence is uncharacterized protein (137 aa).

This is an uncharacterized protein from Frog virus 3 (isolate Goorha) (FV-3).